Consider the following 591-residue polypeptide: L-fucose isomerase (591 aa).

Catalysis depends on proton acceptor residues Glu-337 and Asp-361. Residues Glu-337, Asp-361, and His-528 each contribute to the Mn(2+) site.

The protein belongs to the L-fucose isomerase family. In terms of assembly, homohexamer. Mn(2+) is required as a cofactor.

The protein localises to the cytoplasm. The enzyme catalyses L-fucose = L-fuculose. Its pathway is carbohydrate degradation; L-fucose degradation; L-lactaldehyde and glycerone phosphate from L-fucose: step 1/3. Converts the aldose L-fucose into the corresponding ketose L-fuculose. This chain is L-fucose isomerase, found in Escherichia coli (strain UTI89 / UPEC).